The primary structure comprises 138 residues: NADH dehydrogenase [ubiquinone] 1 alpha subcomplex subunit N7BM (138 aa).

Belongs to the complex I NDUFA12 subunit family. As to quaternary structure, complex I is composed of 42 different subunits.

Its subcellular location is the mitochondrion inner membrane. Its function is as follows. Accessory subunit of the mitochondrial membrane respiratory chain NADH dehydrogenase (Complex I), that is believed not to be involved in catalysis. Complex I functions in the transfer of electrons from NADH to the respiratory chain. The immediate electron acceptor for the enzyme is believed to be ubiquinone. The polypeptide is NADH dehydrogenase [ubiquinone] 1 alpha subcomplex subunit N7BM (Yarrowia lipolytica (strain CLIB 122 / E 150) (Yeast)).